The following is a 125-amino-acid chain: Large ribosomal subunit protein eL8 (125 aa).

It belongs to the eukaryotic ribosomal protein eL8 family. In terms of assembly, part of the 50S ribosomal subunit. Probably part of the RNase P complex.

It localises to the cytoplasm. Functionally, multifunctional RNA-binding protein that recognizes the K-turn motif in ribosomal RNA, the RNA component of RNase P, box H/ACA, box C/D and box C'/D' sRNAs. This is Large ribosomal subunit protein eL8 from Nanoarchaeum equitans (strain Kin4-M).